A 258-amino-acid chain; its full sequence is uncharacterized protein (258 aa).

Residues 1 to 20 (MKCFQKLYIFILILIVLMAG) form the signal peptide. Cysteine 21 carries N-palmitoyl cysteine lipidation. Cysteine 21 carries the S-diacylglycerol cysteine lipid modification.

This sequence belongs to the staphylococcal tandem lipoprotein family.

The protein resides in the cell membrane. This is an uncharacterized protein from Staphylococcus aureus (strain COL).